A 337-amino-acid chain; its full sequence is UDP-3-O-acylglucosamine N-acyltransferase 2 (337 aa).

The active-site Proton acceptor is the histidine 238.

This sequence belongs to the transferase hexapeptide repeat family. LpxD subfamily. In terms of assembly, homotrimer.

It carries out the reaction a UDP-3-O-[(3R)-3-hydroxyacyl]-alpha-D-glucosamine + a (3R)-hydroxyacyl-[ACP] = a UDP-2-N,3-O-bis[(3R)-3-hydroxyacyl]-alpha-D-glucosamine + holo-[ACP] + H(+). It participates in bacterial outer membrane biogenesis; LPS lipid A biosynthesis. Catalyzes the N-acylation of UDP-3-O-acylglucosamine using 3-hydroxyacyl-ACP as the acyl donor. Is involved in the biosynthesis of lipid A, a phosphorylated glycolipid that anchors the lipopolysaccharide to the outer membrane of the cell. This chain is UDP-3-O-acylglucosamine N-acyltransferase 2, found in Francisella tularensis subsp. tularensis (strain FSC 198).